A 487-amino-acid polypeptide reads, in one-letter code: uncharacterized protein (487 aa).

The helical transmembrane segment at 7 to 28 threads the bilayer; that stretch reads HVISIFETLGAYFINIFYNFLY. Asparagine 73, asparagine 83, and asparagine 195 each carry an N-linked (GlcNAc...) asparagine; by host glycan. A coiled-coil region spans residues 196–235; the sequence is RSLLHQIEELTSEKKSLLADLSTLRKKYEKRQSEYRRLVQ. Residues 294 to 305 show a composition bias toward polar residues; sequence TSQELTSKSPNN. The interval 294-324 is disordered; that stretch reads TSQELTSKSPNNYPVPHSRTIVSKPSDNYPV. An N-linked (GlcNAc...) asparagine; by host glycan is attached at asparagine 462.

It belongs to the asfivirus B475L family.

The protein resides in the host membrane. This is an uncharacterized protein from African swine fever virus (isolate Tick/South Africa/Pretoriuskop Pr4/1996) (ASFV).